A 467-amino-acid chain; its full sequence is Hydroxyacid-oxoacid transhydrogenase, mitochondrial (467 aa).

K445 bears the N6-acetyllysine mark. S452 is modified (phosphoserine).

This sequence belongs to the iron-containing alcohol dehydrogenase family. Hydroxyacid-oxoacid transhydrogenase subfamily.

It localises to the mitochondrion. It carries out the reaction (S)-3-hydroxybutanoate + 2-oxoglutarate = (R)-2-hydroxyglutarate + acetoacetate. The catalysed reaction is 4-hydroxybutanoate + 2-oxoglutarate = (R)-2-hydroxyglutarate + succinate semialdehyde. Its function is as follows. Catalyzes the cofactor-independent reversible oxidation of gamma-hydroxybutyrate (GHB) to succinic semialdehyde (SSA) coupled to reduction of 2-ketoglutarate (2-KG) to D-2-hydroxyglutarate (D-2-HG). L-3-hydroxybutyrate (L-3-OHB) is also a substrate for HOT when using 2-KG as hydrogen acceptor, resulting in the formation of D-2-HG. The sequence is that of Hydroxyacid-oxoacid transhydrogenase, mitochondrial (ADHFE1) from Pongo abelii (Sumatran orangutan).